We begin with the raw amino-acid sequence, 3977 residues long: Hybrid PKS-NRPS synthetase gkaA (3977 aa).

One can recognise a Ketosynthase family 3 (KS3) domain in the interval 4-441 (EEPIAVIGSG…GTNAHVILEN (438 aa)). Active-site for beta-ketoacyl synthase activity residues include C177, H316, and H361. Positions 551 to 867 (VFTGQGAQWP…TGVIHRGKND (317 aa)) constitute a Malonyl-CoA:ACP transacylase (MAT) domain. The N-terminal hotdog fold stretch occupies residues 937 to 1072 (NPLLGTRTTD…GRITVTLGES (136 aa)). The 305-residue stretch at 937-1241 (NPLLGTRTTD…VVAFSEATAD (305 aa)) folds into the PKS/mFAS DH domain. H969 (proton acceptor; for dehydratase activity) is an active-site residue. The tract at residues 1087–1241 (LVSIPQDRFY…VVAFSEATAD (155 aa)) is C-terminal hotdog fold. D1147 functions as the Proton donor; for dehydratase activity in the catalytic mechanism. The interval 1286–1580 (YMKKTVEEFP…FSGIDSSTPE (295 aa)) is methyltransferase (cMeT) domain. The Ketoreductase (KR) domain occupies 2128–2301 (TYVLFGLTSD…AASILHIGAV (174 aa)). In terms of domain architecture, Carrier 1 spans 2409 to 2490 (SEVFEIISGA…QLLEYAIDNM (82 aa)). Residue S2450 is modified to O-(pantetheine 4'-phosphoryl)serine. A disordered region spans residues 2497–2542 (HSNGEQGTVSDSGSTNIQLTPASTPSVPSVNLASDSTGSSQVGEDV). The span at 2499-2538 (NGEQGTVSDSGSTNIQLTPASTPSVPSVNLASDSTGSSQV) shows a compositional bias: polar residues. Residues 2584–3018 (EKIIPMSPGQ…LKDISLFSKE (435 aa)) form a condensation region. The interval 3048 to 3437 (IAEHPDTISI…GALEILGRID (390 aa)) is adenylation. The region spanning 3552–3632 (FSLTPTEDKL…AMASLITPAS (81 aa)) is the Carrier 2 domain. S3592 bears the O-(pantetheine 4'-phosphoryl)serine mark. A Thioester reductase (TE) domain is found at 3672 to 3890 (LTGATGFLGH…FVDLVSVQNV (219 aa)).

The protein in the C-terminal section; belongs to the NRP synthetase family. Pantetheine 4'-phosphate serves as cofactor.

Its pathway is mycotoxin biosynthesis. In terms of biological role, hybrid PKS-NRPS synthetase; part of the gene cluster that mediates the biosynthesis of GKK1032, fungal natural products containing a macrocyclic para-cyclophane connected to a decahydrofluorene ring system that show potent antitumor activities. Within the pathway, the PKS-NRPS gkaA, with the help of the trans-enoyl reductase gkaC, synthesize the polyketide-tyrosyl acyl thioester product which can be reductively off-loaded by the terminal reductase (R) domain in gkaA. The PKS module of gkaA acts in combination with the trans-acting enoyl reductase gkaC to produce a methylated polyketide attached to the ACP domain. In parallel, the adenylation (A) domain of the NRPS module activated L-tyrosine, which is then transferred to the ACP domain. The condensation (C) domain subsequently links this group to the polyketide chain, forming an enzyme-bound amide. The alpha/beta hydrolase gkaG is then required to catalyze the subsequent Knoevenagel condensation that affords the 3-pyrrolin-2-one ring, whereas the three proteins gkaB, gkadX and gkaZ then function synergistically to form the cyclophane. The protein is Hybrid PKS-NRPS synthetase gkaA of Penicillium citrinum.